The chain runs to 196 residues: Orotate phosphoribosyltransferase (196 aa).

117 to 125 is a 5-phospho-alpha-D-ribose 1-diphosphate binding site; the sequence is EDIVTTGLS. Positions 121 and 149 each coordinate orotate.

It belongs to the purine/pyrimidine phosphoribosyltransferase family. PyrE subfamily. Homodimer. It depends on Mg(2+) as a cofactor.

The catalysed reaction is orotidine 5'-phosphate + diphosphate = orotate + 5-phospho-alpha-D-ribose 1-diphosphate. It participates in pyrimidine metabolism; UMP biosynthesis via de novo pathway; UMP from orotate: step 1/2. In terms of biological role, catalyzes the transfer of a ribosyl phosphate group from 5-phosphoribose 1-diphosphate to orotate, leading to the formation of orotidine monophosphate (OMP). The chain is Orotate phosphoribosyltransferase from Methylobacterium sp. (strain 4-46).